Reading from the N-terminus, the 89-residue chain is MVNPGRTARALCLLCLALLLLGQDTHSRKLLLQEKHSHGVGNGTTTTQEPSRENGGSTGSNNNGQLQFDSAKWEEFHTDYIYTQDVKKP.

A signal peptide spans 1-22 (MVNPGRTARALCLLCLALLLLG). Positions 23-79 (QDTHSRKLLLQEKHSHGVGNGTTTTQEPSRENGGSTGSNNNGQLQFDSAKWEEFHTD) are excised as a propeptide. The disordered stretch occupies residues 33–70 (QEKHSHGVGNGTTTTQEPSRENGGSTGSNNNGQLQFDS). The N-linked (GlcNAc...) asparagine glycan is linked to Asn-42. Sulfotyrosine is present on residues Tyr-80 and Tyr-82. Residues 85 to 89 (DVKKP) constitute a propeptide that is removed on maturation.

It belongs to the phytosulfokine family. Sulfation is important for activity and for the binding to a putative membrane receptor. In terms of processing, PSK-alpha is produced by endopeptidase digestion. PSK-beta is produced from PSK-alpha by exopeptidase digestion. As to expression, expressed throughout the seedling. More abundant in fragments containing shoot or root apexes where cells proliferate vigorously.

Its subcellular location is the secreted. Functionally, promotes plant cell differentiation, organogenesis and somatic embryogenesis as well as cell proliferation. The protein is Phytosulfokines 1 (PSK1) of Oryza sativa subsp. japonica (Rice).